A 348-amino-acid chain; its full sequence is Phenylalanine--tRNA ligase alpha subunit (348 aa).

Glu-259 contacts Mg(2+).

This sequence belongs to the class-II aminoacyl-tRNA synthetase family. Phe-tRNA synthetase alpha subunit type 1 subfamily. Tetramer of two alpha and two beta subunits. It depends on Mg(2+) as a cofactor.

The protein resides in the cytoplasm. The catalysed reaction is tRNA(Phe) + L-phenylalanine + ATP = L-phenylalanyl-tRNA(Phe) + AMP + diphosphate + H(+). This chain is Phenylalanine--tRNA ligase alpha subunit, found in Lacticaseibacillus paracasei (strain ATCC 334 / BCRC 17002 / CCUG 31169 / CIP 107868 / KCTC 3260 / NRRL B-441) (Lactobacillus paracasei).